We begin with the raw amino-acid sequence, 530 residues long: Probable ATP-binding protein YbiT (530 aa).

2 ABC transporter domains span residues 2 to 252 (LVSS…ERLL) and 320 to 526 (LEVE…YLRS). Residues 34 to 41 (GANGSGKS) and 352 to 359 (GTNGVGKS) each bind ATP.

It belongs to the ABC transporter superfamily. ABCF family. YbiT subfamily.

In Escherichia coli O157:H7, this protein is Probable ATP-binding protein YbiT (ybiT).